We begin with the raw amino-acid sequence, 231 residues long: MIP18 family protein YHR122W (231 aa).

2 disordered regions span residues 1-26 and 75-100; these read MSEFLNENPDILEENQLPTRKEDSTK and LTSDEDSLPAESEDESVAGGGKEEEE. At Ser2 the chain carries N-acetylserine. Over residues 76 to 90 the composition is skewed to acidic residues; sequence TSDEDSLPAESEDES.

It belongs to the MIP18 family.

Functionally, may play a role in chromosome segregation through establishment of sister chromatid cohesion. This chain is MIP18 family protein YHR122W, found in Saccharomyces cerevisiae (strain ATCC 204508 / S288c) (Baker's yeast).